Consider the following 134-residue polypeptide: Transcription antitermination protein NusB (134 aa).

Belongs to the NusB family.

In terms of biological role, involved in transcription antitermination. Required for transcription of ribosomal RNA (rRNA) genes. Binds specifically to the boxA antiterminator sequence of the ribosomal RNA (rrn) operons. In Shewanella frigidimarina (strain NCIMB 400), this protein is Transcription antitermination protein NusB.